The primary structure comprises 447 residues: Coagulation factor VII (447 aa).

An N-terminal signal peptide occupies residues 1 to 23 (MLSQAWALALLCFLLSLWGSLPA). The propeptide occupies 24–40 (VFLPQEQALSILHRPRR). In terms of domain architecture, Gla spans 41-85 (ANGFLEELLPGSLERECREELCSFEEAHEIFRNEERTRQFWVSYN). Residues Glu46, Glu47, Glu54, Glu56, Glu59, Glu60, Glu65, Glu66, Glu69, Glu74, and Glu75 each carry the 4-carboxyglutamate modification. A disulfide bridge links Cys57 with Cys62. In terms of domain architecture, EGF-like 1; calcium-binding spans 86–122 (DGDQCASSPCQNGGSCEDQLRSYICFCPDGFEGRNCE). Disulfide bonds link Cys90/Cys101, Cys95/Cys110, Cys112/Cys121, Cys131/Cys142, Cys138/Cys152, Cys154/Cys167, Cys175/Cys302, Cys199/Cys204, Cys218/Cys234, and Cys350/Cys369. O-linked (Glc...) serine glycosylation is present at Ser92. Ser92 carries O-linked (Glc...) serine; alternate glycosylation. Ser92 carries an O-linked (Xyl...) serine; alternate glycan. O-linked (Fuc) serine glycosylation is present at Ser100. The EGF-like 2 domain maps to 127–168 (SQLICANDNGGCEQYCGADPGAGRFCWCHEGYALQADGVSCA). An N-linked (GlcNAc...) asparagine glycan is attached at Asn185. One can recognise a Peptidase S1 domain in the interval 193-432 (IVGGHVCPKG…YTAWLRQLMG (240 aa)). The Charge relay system role is filled by His233. The N-linked (GlcNAc...) asparagine glycan is linked to Asn243. The active-site Charge relay system is Asp282. Asp378 is a binding site for substrate. A disulfide bond links Cys380 and Cys408. Catalysis depends on Ser384, which acts as the Charge relay system.

Belongs to the peptidase S1 family. Heterodimer of a light chain and a heavy chain linked by a disulfide bond. The vitamin K-dependent, enzymatic carboxylation of some glutamate residues allows the modified protein to bind calcium. Post-translationally, O-glycosylated. O-fucosylated by POFUT1 on a conserved serine or threonine residue found in the consensus sequence C2-X(4,5)-[S/T]-C3 of EGF domains, where C2 and C3 are the second and third conserved cysteines. In terms of processing, can be either O-glucosylated or O-xylosylated at Ser-92 by POGLUT1. In terms of tissue distribution, plasma.

It localises to the secreted. It catalyses the reaction Selective cleavage of Arg-|-Ile bond in factor X to form factor Xa.. Functionally, initiates the extrinsic pathway of blood coagulation. Serine protease that circulates in the blood in a zymogen form. Factor VII is converted to factor VIIa by factor Xa, factor XIIa, factor IXa, or thrombin by minor proteolysis. In the presence of tissue factor and calcium ions, factor VIIa then converts factor X to factor Xa by limited proteolysis. Factor VIIa also converts factor IX to factor IXa in the presence of tissue factor and calcium. The chain is Coagulation factor VII (F7) from Bos taurus (Bovine).